We begin with the raw amino-acid sequence, 478 residues long: Protein nucleotidyltransferase YdiU (478 aa).

Residues Gly-84, Gly-86, Arg-87, Lys-107, Asp-119, Gly-120, Arg-170, and Arg-177 each coordinate ATP. The active-site Proton acceptor is Asp-246. 2 residues coordinate Mg(2+): Asn-247 and Asp-256. Asp-256 provides a ligand contact to ATP.

Belongs to the SELO family. It depends on Mg(2+) as a cofactor. Mn(2+) serves as cofactor.

It carries out the reaction L-seryl-[protein] + ATP = 3-O-(5'-adenylyl)-L-seryl-[protein] + diphosphate. It catalyses the reaction L-threonyl-[protein] + ATP = 3-O-(5'-adenylyl)-L-threonyl-[protein] + diphosphate. The enzyme catalyses L-tyrosyl-[protein] + ATP = O-(5'-adenylyl)-L-tyrosyl-[protein] + diphosphate. The catalysed reaction is L-histidyl-[protein] + UTP = N(tele)-(5'-uridylyl)-L-histidyl-[protein] + diphosphate. It carries out the reaction L-seryl-[protein] + UTP = O-(5'-uridylyl)-L-seryl-[protein] + diphosphate. It catalyses the reaction L-tyrosyl-[protein] + UTP = O-(5'-uridylyl)-L-tyrosyl-[protein] + diphosphate. Functionally, nucleotidyltransferase involved in the post-translational modification of proteins. It can catalyze the addition of adenosine monophosphate (AMP) or uridine monophosphate (UMP) to a protein, resulting in modifications known as AMPylation and UMPylation. The chain is Protein nucleotidyltransferase YdiU from Escherichia coli O157:H7.